Consider the following 842-residue polypeptide: Glucans biosynthesis glucosyltransferase H (842 aa).

The next 8 membrane-spanning stretches (helical) occupy residues 140–160 (ILLL…KTIL), 194–214 (ILIL…TALM), 513–533 (VFLT…FLAL), 568–588 (IALF…SIIL), 600–620 (FIRV…LAPV), 622–642 (MLFH…VWNS), 656–676 (FMRH…MAWL), and 680–700 (FLFW…VSAI).

It belongs to the glycosyltransferase 2 family. OpgH subfamily.

Its subcellular location is the cell inner membrane. The protein operates within glycan metabolism; osmoregulated periplasmic glucan (OPG) biosynthesis. Its function is as follows. Involved in the biosynthesis of osmoregulated periplasmic glucans (OPGs). In Klebsiella pneumoniae (strain 342), this protein is Glucans biosynthesis glucosyltransferase H.